A 475-amino-acid chain; its full sequence is Probable pectate lyase 7 (475 aa).

Positions 1–24 are cleaved as a signal peptide; it reads METARLFKLVCVICIASLIPTIRA. Asn-67 and Asn-96 each carry an N-linked (GlcNAc...) asparagine glycan. The disordered stretch occupies residues 91–117; sequence ISSPTNSTRRSLTGRGKGKGKGKWSKL. Ca(2+) is bound by residues Asp-271, Asp-295, and Asp-299. Arg-351 is a catalytic residue.

Belongs to the polysaccharide lyase 1 family. The cofactor is Ca(2+).

The catalysed reaction is Eliminative cleavage of (1-&gt;4)-alpha-D-galacturonan to give oligosaccharides with 4-deoxy-alpha-D-galact-4-enuronosyl groups at their non-reducing ends.. It functions in the pathway glycan metabolism; pectin degradation; 2-dehydro-3-deoxy-D-gluconate from pectin: step 2/5. The sequence is that of Probable pectate lyase 7 from Arabidopsis thaliana (Mouse-ear cress).